Here is a 668-residue protein sequence, read N- to C-terminus: UvrABC system protein B (668 aa).

A Helicase ATP-binding domain is found at 25-414; it reads RGLHAGARFQ…IVEQLIRPTG (390 aa). 38 to 45 serves as a coordination point for ATP; that stretch reads GVTGSGKT. The Beta-hairpin signature appears at 91–114; the sequence is YYDYYQPESYVPARDLYIEKDASI. A Helicase C-terminal domain is found at 431-594; that stretch reads DICQRVKACS…TIKKSIEDIL (164 aa). The region spanning 627-662 is the UVR domain; sequence KKMVQALRLHMKVCARELRFEEAALIRDKILQLQRQ.

Belongs to the UvrB family. As to quaternary structure, forms a heterotetramer with UvrA during the search for lesions. Interacts with UvrC in an incision complex.

The protein resides in the cytoplasm. In terms of biological role, the UvrABC repair system catalyzes the recognition and processing of DNA lesions. A damage recognition complex composed of 2 UvrA and 2 UvrB subunits scans DNA for abnormalities. Upon binding of the UvrA(2)B(2) complex to a putative damaged site, the DNA wraps around one UvrB monomer. DNA wrap is dependent on ATP binding by UvrB and probably causes local melting of the DNA helix, facilitating insertion of UvrB beta-hairpin between the DNA strands. Then UvrB probes one DNA strand for the presence of a lesion. If a lesion is found the UvrA subunits dissociate and the UvrB-DNA preincision complex is formed. This complex is subsequently bound by UvrC and the second UvrB is released. If no lesion is found, the DNA wraps around the other UvrB subunit that will check the other stand for damage. The chain is UvrABC system protein B from Treponema pallidum (strain Nichols).